Reading from the N-terminus, the 205-residue chain is Small ribosomal subunit protein uS4 (205 aa).

The span at 1 to 16 shows a compositional bias: basic and acidic residues; it reads MSKRESSKYKIDRRMG. The disordered stretch occupies residues 1–46; it reads MSKRESSKYKIDRRMGENIWGRPKSPVNRREYGPGQHGQRRKGKLS. The S4 RNA-binding domain maps to 94-157; the sequence is SRLDAIVYRA…KQLVIVLESV (64 aa).

It belongs to the universal ribosomal protein uS4 family. As to quaternary structure, part of the 30S ribosomal subunit. Contacts protein S5. The interaction surface between S4 and S5 is involved in control of translational fidelity.

Its function is as follows. One of the primary rRNA binding proteins, it binds directly to 16S rRNA where it nucleates assembly of the body of the 30S subunit. With S5 and S12 plays an important role in translational accuracy. The protein is Small ribosomal subunit protein uS4 of Rhizobium rhizogenes (strain K84 / ATCC BAA-868) (Agrobacterium radiobacter).